The primary structure comprises 389 residues: Succinate--CoA ligase [ADP-forming] subunit beta (389 aa).

The ATP-grasp domain maps to 9–236; that stretch reads RDLFEAHGVP…ERTEDPLEAK (228 aa). ATP is bound by residues Lys-45, 52–54, Ala-94, and Glu-99; that span reads GRG. Positions 191 and 205 each coordinate Mg(2+). Substrate-binding positions include Asn-256 and 318-320; that span reads GIT.

This sequence belongs to the succinate/malate CoA ligase beta subunit family. In terms of assembly, heterotetramer of two alpha and two beta subunits. Mg(2+) serves as cofactor.

It carries out the reaction succinate + ATP + CoA = succinyl-CoA + ADP + phosphate. The enzyme catalyses GTP + succinate + CoA = succinyl-CoA + GDP + phosphate. The protein operates within carbohydrate metabolism; tricarboxylic acid cycle; succinate from succinyl-CoA (ligase route): step 1/1. Functionally, succinyl-CoA synthetase functions in the citric acid cycle (TCA), coupling the hydrolysis of succinyl-CoA to the synthesis of either ATP or GTP and thus represents the only step of substrate-level phosphorylation in the TCA. The beta subunit provides nucleotide specificity of the enzyme and binds the substrate succinate, while the binding sites for coenzyme A and phosphate are found in the alpha subunit. The polypeptide is Succinate--CoA ligase [ADP-forming] subunit beta (Micrococcus luteus (strain ATCC 4698 / DSM 20030 / JCM 1464 / CCM 169 / CCUG 5858 / IAM 1056 / NBRC 3333 / NCIMB 9278 / NCTC 2665 / VKM Ac-2230) (Micrococcus lysodeikticus)).